The sequence spans 233 residues: Orotidine 5'-phosphate decarboxylase (233 aa).

Substrate contacts are provided by residues aspartate 11, lysine 33, 60–69 (DLKFHDIPNT), threonine 120, arginine 181, glutamine 190, glycine 210, and arginine 211. The active-site Proton donor is lysine 62.

It belongs to the OMP decarboxylase family. Type 1 subfamily. Homodimer.

The enzyme catalyses orotidine 5'-phosphate + H(+) = UMP + CO2. Its pathway is pyrimidine metabolism; UMP biosynthesis via de novo pathway; UMP from orotate: step 2/2. Functionally, catalyzes the decarboxylation of orotidine 5'-monophosphate (OMP) to uridine 5'-monophosphate (UMP). The protein is Orotidine 5'-phosphate decarboxylase of Vibrio parahaemolyticus serotype O3:K6 (strain RIMD 2210633).